A 482-amino-acid chain; its full sequence is Aspartic proteinase 36 (482 aa).

An N-terminal signal peptide occupies residues 1–27 (MVTTMDPSRISRIVAVVFVLVIQVVSG). An N-linked (GlcNAc...) asparagine glycan is attached at N32. In terms of domain architecture, Peptidase A1 spans 78-429 (YFTKIKLGSP…DLENEVIGWA (352 aa)). D96 is an active-site residue. N178, N204, and N226 each carry an N-linked (GlcNAc...) asparagine glycan. Residue D310 is part of the active site. C347 and C388 are oxidised to a cystine. An N-linked (GlcNAc...) asparagine glycan is attached at N432. Residue S456 is the site of GPI-anchor amidated serine attachment. Positions 457-482 (AASSVMNGTLVTLLSILIWVFHSFTS) are cleaved as a propeptide — removed in mature form. A glycan (N-linked (GlcNAc...) asparagine) is linked at N463.

It belongs to the peptidase A1 family. In terms of tissue distribution, highly expressed in pollen and pollen tubes. Mostly expressed in roots, flowers and inflorescence, and at lower levels in stems, seedlings and siliques.

It localises to the cell membrane. It is found in the cytoplasm. The protein localises to the cytosol. Functionally, displays aspartic proteolytic activity. Together with A39, contributes to pollen and ovule development, including the apical cell wall constitution of the growing pollen tubes. This chain is Aspartic proteinase 36, found in Arabidopsis thaliana (Mouse-ear cress).